The following is a 364-amino-acid chain: Variable large protein 21 (364 aa).

An N-terminal signal peptide occupies residues 1 to 26 (MRKRISAIINKLNISIMMMIVVLMIG). Residue cysteine 27 is the site of N-palmitoyl cysteine attachment. The S-diacylglycerol cysteine moiety is linked to residue cysteine 27.

It belongs to the variable large protein (Vlp) family. Alpha subfamily.

Its subcellular location is the cell outer membrane. In terms of biological role, the Vlp and Vsp proteins are antigenically distinct proteins, only one vlp or vsp gene is transcriptionally active at any one time. Switching between these genes is a mechanism of host immune response evasion. This Borrelia hermsii protein is Variable large protein 21.